We begin with the raw amino-acid sequence, 523 residues long: Sensory neuron membrane protein 1 (523 aa).

Topologically, residues 1–11 (MQLPRELKYAA) are cytoplasmic. A helical membrane pass occupies residues 12–32 (IAGGVALFGLIFGWVLFPTIL). Over 33–458 (KSQLKKEMAL…HQLFIPKRVV (426 aa)) the chain is Extracellular. Residue Asn-229 is glycosylated (N-linked (GlcNAc...) asparagine). Cystine bridges form between Cys-268–Cys-333, Cys-297–Cys-352, and Cys-335–Cys-341. Asn-440 carries N-linked (GlcNAc...) asparagine glycosylation. The chain crosses the membrane as a helical span at residues 459-479 (GVLRWWMVSFGSLGAVIGIVF). Over 480 to 523 (HFRDHIMRLAVSGDTKVSKVIPEVEEQKDISVIGQAQEPAKVNI) the chain is Cytoplasmic.

It belongs to the CD36 family.

It localises to the cell membrane. Plays an olfactory role that is not restricted to pheromone sensitivity. The polypeptide is Sensory neuron membrane protein 1 (Helicoverpa assulta (Oriental tobacco budworm)).